Here is a 127-residue protein sequence, read N- to C-terminus: Protein translocase subunit SecE (127 aa).

A run of 3 helical transmembrane segments spans residues Val17 to Tyr37, Leu41 to Tyr61, and Phe95 to Ile115.

Belongs to the SecE/SEC61-gamma family. Component of the Sec protein translocase complex. Heterotrimer consisting of SecY, SecE and SecG subunits. The heterotrimers can form oligomers, although 1 heterotrimer is thought to be able to translocate proteins. Interacts with the ribosome. Interacts with SecDF, and other proteins may be involved. Interacts with SecA.

It is found in the cell inner membrane. Essential subunit of the Sec protein translocation channel SecYEG. Clamps together the 2 halves of SecY. May contact the channel plug during translocation. This Buchnera aphidicola subsp. Acyrthosiphon pisum (strain APS) (Acyrthosiphon pisum symbiotic bacterium) protein is Protein translocase subunit SecE.